The chain runs to 466 residues: RuvB-like helicase 2 (466 aa).

74 to 81 (GPPSTGKT) contributes to the ATP binding site.

The protein belongs to the RuvB family. As to quaternary structure, may form heterododecamers with RVB1. Component of the SWR1 chromatin remodeling complex, the INO80 chromatin remodeling complex, and of the R2TP complex.

The protein resides in the nucleus. The enzyme catalyses ATP + H2O = ADP + phosphate + H(+). Functionally, DNA helicase which participates in several chromatin remodeling complexes, including the SWR1 and the INO80 complexes. The SWR1 complex mediates the ATP-dependent exchange of histone H2A for the H2A variant HZT1 leading to transcriptional regulation of selected genes by chromatin remodeling. The INO80 complex remodels chromatin by shifting nucleosomes and is involved in DNA repair. Also involved in pre-rRNA processing. The polypeptide is RuvB-like helicase 2 (RVB2) (Yarrowia lipolytica (strain CLIB 122 / E 150) (Yeast)).